The primary structure comprises 332 residues: Glycerol-3-phosphate dehydrogenase [NAD(P)+] (332 aa).

3 residues coordinate NADPH: tryptophan 13, arginine 33, and lysine 107. Sn-glycerol 3-phosphate is bound by residues lysine 107, glycine 136, and serine 138. Alanine 140 lines the NADPH pocket. 5 residues coordinate sn-glycerol 3-phosphate: lysine 191, aspartate 244, serine 254, arginine 255, and asparagine 256. Lysine 191 functions as the Proton acceptor in the catalytic mechanism. Residue arginine 255 coordinates NADPH. Glutamate 280 is a binding site for NADPH.

It belongs to the NAD-dependent glycerol-3-phosphate dehydrogenase family.

It localises to the cytoplasm. The catalysed reaction is sn-glycerol 3-phosphate + NAD(+) = dihydroxyacetone phosphate + NADH + H(+). The enzyme catalyses sn-glycerol 3-phosphate + NADP(+) = dihydroxyacetone phosphate + NADPH + H(+). It functions in the pathway membrane lipid metabolism; glycerophospholipid metabolism. Its function is as follows. Catalyzes the reduction of the glycolytic intermediate dihydroxyacetone phosphate (DHAP) to sn-glycerol 3-phosphate (G3P), the key precursor for phospholipid synthesis. The polypeptide is Glycerol-3-phosphate dehydrogenase [NAD(P)+] (Alkalilimnicola ehrlichii (strain ATCC BAA-1101 / DSM 17681 / MLHE-1)).